The primary structure comprises 597 residues: FERM domain-containing protein 3 (597 aa).

Residues 32-312 (MRCTIRLLDD…ENQAFYKYAK (281 aa)) enclose the FERM domain. Positions 409–435 (SAPLISSSPVKAAQEYEDPPSEEEDKI) are disordered. Over residues 423–432 (EYEDPPSEEE) the composition is skewed to acidic residues. The chain crosses the membrane as a helical span at residues 531–551 (LLVVGLGLLLFVFPLLLLLLE).

It is found in the membrane. In terms of biological role, putative tumor suppressor gene that may be implicated in the origin and progression of lung cancer. The sequence is that of FERM domain-containing protein 3 (FRMD3) from Pongo abelii (Sumatran orangutan).